We begin with the raw amino-acid sequence, 459 residues long: Glycosyl hydrolase family 109 protein (459 aa).

The tat-type signal signal peptide spans 1 to 31 (MHNIHRRHFLKAAGAVTAGLITANITASTHA). NAD(+)-binding positions include 64–65 (ER), D86, 135–138 (WEWH), 155–156 (EV), and N184. Residues Y213, R232, 244–247 (YPTH), and Y326 contribute to the substrate site. Position 244 (Y244) interacts with NAD(+).

This sequence belongs to the Gfo/Idh/MocA family. Glycosyl hydrolase 109 subfamily. It depends on NAD(+) as a cofactor. In terms of processing, predicted to be exported by the Tat system. The position of the signal peptide cleavage has not been experimentally proven.

Its function is as follows. Glycosidase. The chain is Glycosyl hydrolase family 109 protein from Shewanella sp. (strain W3-18-1).